Here is a 429-residue protein sequence, read N- to C-terminus: Small ribosomal subunit protein bS1 (429 aa).

S1 motif domains are found at residues 55–128, 144–211, 231–299, and 316–385; these read GDVV…LSKK, GDTV…SRKA, GEVV…LSIK, and GSVL…LSMK. Positions 382-399 are enriched in basic and acidic residues; that stretch reads LSMKALEEKPEREDRRGN. The disordered stretch occupies residues 382-412; that stretch reads LSMKALEEKPEREDRRGNDGSASRADIAAYK.

This sequence belongs to the bacterial ribosomal protein bS1 family.

In terms of biological role, binds mRNA; thus facilitating recognition of the initiation point. It is needed to translate mRNA with a short Shine-Dalgarno (SD) purine-rich sequence. The protein is Small ribosomal subunit protein bS1 (rps1) of Leuconostoc lactis.